Here is a 516-residue protein sequence, read N- to C-terminus: Squalene epoxidase 5 (516 aa).

The next 2 membrane-spanning stretches (helical) occupy residues 3 to 23 (FTNV…VFYV) and 45 to 65 (ATDV…YALA). FAD is bound by residues 55–56 (VG), 75–76 (ER), Arg83, Phe88, Arg156, Val172, Asp335, and Met348. Residues 446-466 (LIYHLCAITLSSIGHLLSPFP) traverse the membrane as a helical segment.

The protein belongs to the squalene monooxygenase family. FAD is required as a cofactor. Expressed in seedlings, leaves, stems and inflorescences. Detected in siliques.

The protein resides in the membrane. It carries out the reaction squalene + reduced [NADPH--hemoprotein reductase] + O2 = (S)-2,3-epoxysqualene + oxidized [NADPH--hemoprotein reductase] + H2O + H(+). It participates in terpene metabolism; lanosterol biosynthesis; lanosterol from farnesyl diphosphate: step 2/3. Functionally, catalyzes the stereospecific oxidation of squalene to (S)-2,3-epoxysqualene, and is considered to be a rate-limiting enzyme in steroid biosynthesis. The polypeptide is Squalene epoxidase 5 (SQE5) (Arabidopsis thaliana (Mouse-ear cress)).